A 163-amino-acid chain; its full sequence is MSQQEEMKNLTLLGSKETPYIFEYSPQVLESFDNRHADNDYFIKFNCPEFTSLCPITGQPDFASIYISYIPDQLCVESKSLKLYLFSYRNHGDFHENCINTIGKDLVELLNPRYLEVWGKFTPRGGISIDPYYNYGRPKTKYENMAEQRLFNHDLYPENIDNR.

The active-site Thioimide intermediate is Cys54. Asp61 (proton donor) is an active-site residue. Substrate-binding positions include 76 to 78 (VES) and 95 to 96 (HE).

Belongs to the GTP cyclohydrolase I family. QueF type 1 subfamily.

The protein resides in the cytoplasm. It carries out the reaction 7-aminomethyl-7-carbaguanine + 2 NADP(+) = 7-cyano-7-deazaguanine + 2 NADPH + 3 H(+). Its pathway is tRNA modification; tRNA-queuosine biosynthesis. Functionally, catalyzes the NADPH-dependent reduction of 7-cyano-7-deazaguanine (preQ0) to 7-aminomethyl-7-deazaguanine (preQ1). This chain is NADPH-dependent 7-cyano-7-deazaguanine reductase, found in Streptococcus thermophilus (strain CNRZ 1066).